Consider the following 711-residue polypeptide: K(+)-insensitive pyrophosphate-energized proton pump (711 aa).

The next 5 membrane-spanning stretches (helical) occupy residues 7–27 (LIYGVIVIAALVIIGLIKFIF), 58–78 (IASLALIVAVIIVVANYYGHL), 85–105 (ALSFALHVGFAFITGAFCSAL), 145–165 (LAVTALSLFGVATLFLAYGGL), and 179–199 (IVGFGFGASFVALFAQLGGGI). K202 lines the substrate pocket. Mg(2+) is bound by residues D205, D209, and D235. The next 6 membrane-spanning stretches (helical) occupy residues 251–271 (TAAENIGAMILGVGLYPIFGW), 274–294 (ILFPLVARAIGIIASIIGIFF), 311–331 (GYFVTTVVNLIALFFAVKVML), 343–363 (YLLLYGAVVTGVILSYIFVFL), 403–423 (LPVIFISAAIYIAYKLGEMAI), and 431–451 (LYGTAIATMGMLSTTAYILAM). Residue D459 coordinates Mg(2+). A run of 4 helical transmembrane segments spans residues 495–515 (YAIGSAALATFLLFSAYLDEV), 535–555 (EVFIGAFIGAMIVYLFSSTAI), 602–622 (EMVIPGLIVVVTPILVGVILG), and 624–644 (EAAAAFLMIGTISGVILALYL). The Ca(2+) site is built by D652, D678, and D682. K685 provides a ligand contact to substrate. Residues 690–710 (PSLHVLIKLISTITLVFVALF) form a helical membrane-spanning segment.

It belongs to the H(+)-translocating pyrophosphatase (TC 3.A.10) family. K(+)-insensitive subfamily. Homodimer. Mg(2+) is required as a cofactor.

The protein resides in the cell membrane. It catalyses the reaction diphosphate + H2O + H(+)(in) = 2 phosphate + 2 H(+)(out). In terms of biological role, proton pump that utilizes the energy of pyrophosphate hydrolysis as the driving force for proton movement across the membrane. Generates a proton motive force. The protein is K(+)-insensitive pyrophosphate-energized proton pump of Caldanaerobacter subterraneus subsp. tengcongensis (strain DSM 15242 / JCM 11007 / NBRC 100824 / MB4) (Thermoanaerobacter tengcongensis).